A 512-amino-acid polypeptide reads, in one-letter code: mRNA export factor (512 aa).

Low complexity predominate over residues 1 to 15 (MATDIDMLIDLGLDL). Residues 1 to 243 (MATDIDMLID…APERKAPAAD (243 aa)) are disordered. Residues 5–17 (IDMLIDLGLDLSD) carry the Nuclear export signal motif. A phosphoserine; by host mark is found at Ser-16 and Ser-18. Composition is skewed to acidic residues over residues 16 to 26 (SDSDLDEDPPE) and 35 to 51 (LESDSSGECSSSDEDME). The tract at residues 104–112 (VWSRLGARR) is interaction with host ALYREF. The Nuclear localization signal signature appears at 110–138 (ARRPSCSPEQHGGKVARLQPPPTKAQPAR). Position 114 is a phosphoserine; by host (Ser-114). Arg-138 is modified (dimethylated arginine; by host). Residues 138–152 (RGGRRGRRRGRGRGG) form an RGG-box region. Basic residues predominate over residues 139-149 (GGRRGRRRGRG). Residue Arg-148 is modified to Omega-N-methylarginine; by host. Residue Arg-150 is modified to Dimethylated arginine; by host. Positions 214–233 (APPPLMTLAIAPPPADPRAP) are enriched in pro residues. Zn(2+)-binding residues include Cys-400, His-479, Cys-483, and Cys-488. A CHC2-type zinc finger spans residues 400 to 488 (CYLKARGLCG…HRQECSSRVC (89 aa)). Residues 500–512 (YVHGKYFYCNSLF) form an important for homodimerization region.

The protein belongs to the HHV-1 ICP27 protein family. In terms of assembly, homodimer. Interacts with host RBP1; this interaction facilitates the RNA polymerase recruitment to viral transcription sites. Interacts (via the RGG box) with host ALYREF/THOC4; this interaction recruits ALYREF to viral replication compartments and probably directs viral mRNA to the TAP/NFX1 pathway. Interacts with host ALYREF2. Interacts (via the RGG box) with host SRPK1; this interaction relocalizes SRPK1 to the nucleus and seems to alter its activity. Interacts with ICP4; this interaction modulates ICP4 DNA-binding activity. Interacts with host NXF1; this interaction allows efficient export of HHV-1 early and late transcripts. Post-translationally, methylated within the RGG box possibly by host PRMT1. When hypomethylated, ICP27 is exported to the cytoplasm earlier and more rapidly. In terms of processing, phosphorylated.

The protein localises to the host cytoplasm. It is found in the host nucleus. Its function is as follows. Multifunctional regulator of the expression of viral genes that contributes to the shutoff of host protein synthesis and mediates nuclear export of viral intronless mRNAs. Early in infection, this immediate early (EI) protein mediates the inhibition of cellular splicing. This results in the accumulation of unprocessed 3'end pre-mRNAs which can't be exported from the nucleus. Cellular protein synthesis is thereby shut off early after virus infection. Later in the infection, it helps recruit cellular RNA polymerase II to viral replication sites and promotes the nuclear export of viral intronless mRNAs by interacting with mRNAs and host NXF1/TAP. ICP27 binds to NUP62 which may provide facilitated viral mRNA export and may indirectly compete with some host cell transport receptors for binding and inhibit cellular nucleocytoplasmic transport pathways. Also stimulates translation of viral transcripts. Repression of host gene expression blocks the cell cycle at the G1 phase and prevents apoptosis. Seems to silence the 3' splice site of the promyelocytic leukemia (PML) intron 7a, thereby switching PML isoforms from PML-II to PML-V. This could be linked to the accelerated mRNA export induced by ICP27 which might not provide sufficient time for PML pre-mRNA to be spliced in the nucleus. The chain is mRNA export factor from Homo sapiens (Human).